We begin with the raw amino-acid sequence, 177 residues long: Nucleoside triphosphate/diphosphate phosphatase (177 aa).

The Proton donor role is filled by R23. Mg(2+) is bound by residues N87, D103, D105, D107, D120, and E123.

The protein belongs to the Ntdp family. Mg(2+) is required as a cofactor.

The catalysed reaction is a ribonucleoside 5'-triphosphate + H2O = a ribonucleoside 5'-diphosphate + phosphate + H(+). It catalyses the reaction a ribonucleoside 5'-diphosphate + H2O = a ribonucleoside 5'-phosphate + phosphate + H(+). In terms of biological role, has nucleoside phosphatase activity towards nucleoside triphosphates and nucleoside diphosphates. The chain is Nucleoside triphosphate/diphosphate phosphatase from Streptococcus sanguinis (strain SK36).